Here is a 348-residue protein sequence, read N- to C-terminus: NADH-quinone oxidoreductase subunit H (348 aa).

The next 8 helical transmembrane spans lie at 21-41 (IAGI…VIYV), 87-107 (GIFL…WAVI), 120-140 (VGLL…VMAG), 166-186 (IGFI…SEIV), 195-215 (GIVN…LFFI), 258-278 (NILL…LPPI), 288-308 (GFLW…WIWA), and 325-345 (VFLP…MATG).

Belongs to the complex I subunit 1 family. NDH-1 is composed of 14 different subunits. Subunits NuoA, H, J, K, L, M, N constitute the membrane sector of the complex.

The protein resides in the cell inner membrane. The enzyme catalyses a quinone + NADH + 5 H(+)(in) = a quinol + NAD(+) + 4 H(+)(out). In terms of biological role, NDH-1 shuttles electrons from NADH, via FMN and iron-sulfur (Fe-S) centers, to quinones in the respiratory chain. The immediate electron acceptor for the enzyme in this species is believed to be ubiquinone. Couples the redox reaction to proton translocation (for every two electrons transferred, four hydrogen ions are translocated across the cytoplasmic membrane), and thus conserves the redox energy in a proton gradient. This subunit may bind ubiquinone. This Erythrobacter litoralis (strain HTCC2594) protein is NADH-quinone oxidoreductase subunit H.